Consider the following 191-residue polypeptide: MVSFEDLLNYSLNEEKNKITEEFKKILSEMNQIIDEAYAEVYREYSAKITDLVNKNNDRIRGEIAKMEIENKRLISKEMDYWIENVKENAKKSLYEFVKTDNYKKGLESIISREVSDGSIIYCSPSDQKSISDIIKKKKISCKIVVDEKIVGGIKIYYPDKSLSKDFTLETILNQVFDDIRDKIAQILFGE.

It belongs to the V-ATPase E subunit family. In terms of assembly, has multiple subunits with at least A(3), B(3), C, D, E, F, H, I and proteolipid K(x). Post-translationally, the N-terminus is blocked.

The protein localises to the cell membrane. Component of the A-type ATP synthase that produces ATP from ADP in the presence of a proton gradient across the membrane. This Sulfurisphaera tokodaii (strain DSM 16993 / JCM 10545 / NBRC 100140 / 7) (Sulfolobus tokodaii) protein is A-type ATP synthase subunit E.